Here is a 456-residue protein sequence, read N- to C-terminus: Yersinopine synthase (456 aa).

NADP(+) is bound by residues 12–15 (AGPA), 35–40 (NRPSTK), and Thr-154. Residue His-242 is the Proton donor/acceptor of the active site.

It belongs to the staphylopine dehydrogenase family. As to quaternary structure, homodimer.

The catalysed reaction is yersinopine + NADP(+) + H2O = (2S)-2-amino-4-{[(1S)-1-carboxy-2-(1H-imidazol-4-yl)ethyl]amino}butanoate + pyruvate + NADPH + H(+). Functionally, catalyzes the NADPH-dependent reductive condensation of pyruvate to the intermediate formed by the adjacently encoded enzyme y2836, namely (2S)-2-amino-4-{[(1S)-1-carboxy-2-(1H-imidazol-4-yl)ethyl]amino}butanoate, leading to the production of yersinopine. This is the last step in the biosynthesis of the metallophore yersinopine, which is involved in metal acquisition and thus enables bacterial growth inside the host, where metal access is limited. Therefore, this enzyme probably contributes to Yersinia virulence. Cannot use alpha-ketoglutarate in place of pyruvate, and displays only poor efficiency with oxaloacetate and glyoxylate. This chain is Yersinopine synthase, found in Yersinia pestis.